A 1044-amino-acid chain; its full sequence is Isoleucine--tRNA ligase (1044 aa).

The 'HIGH' region motif lies at 49-59; sequence PYCSGRIHLGT. The 'KMSKS' region motif lies at 591-595; sequence KMSKS. K594 is an ATP binding site.

This sequence belongs to the class-I aminoacyl-tRNA synthetase family. IleS type 2 subfamily. In terms of assembly, monomer. It depends on Zn(2+) as a cofactor.

It localises to the cytoplasm. It catalyses the reaction tRNA(Ile) + L-isoleucine + ATP = L-isoleucyl-tRNA(Ile) + AMP + diphosphate. Functionally, catalyzes the attachment of isoleucine to tRNA(Ile). As IleRS can inadvertently accommodate and process structurally similar amino acids such as valine, to avoid such errors it has two additional distinct tRNA(Ile)-dependent editing activities. One activity is designated as 'pretransfer' editing and involves the hydrolysis of activated Val-AMP. The other activity is designated 'posttransfer' editing and involves deacylation of mischarged Val-tRNA(Ile). This Methanothermobacter thermautotrophicus (strain ATCC 29096 / DSM 1053 / JCM 10044 / NBRC 100330 / Delta H) (Methanobacterium thermoautotrophicum) protein is Isoleucine--tRNA ligase.